The sequence spans 620 residues: Probable potassium transport system protein Kup 1 (620 aa).

12 helical membrane passes run 10-30, 50-70, 102-122, 138-158, 168-188, 211-231, 246-266, 284-304, 336-356, 368-388, 393-413, and 415-435; these read LLIS…LYAL, VLSL…VIVI, MLLG…TPAI, LTPY…MIQK, FGPV…VNIV, MMSF…EALY, WFAL…ALLL, MVVP…QAVI, IYIP…VIGF, IAVT…MALM, WIAV…FFFA, and IIKV…SFTV.

It belongs to the HAK/KUP transporter (TC 2.A.72) family.

Its subcellular location is the cell inner membrane. It carries out the reaction K(+)(in) + H(+)(in) = K(+)(out) + H(+)(out). Its function is as follows. Transport of potassium into the cell. Likely operates as a K(+):H(+) symporter. The protein is Probable potassium transport system protein Kup 1 of Rhodopseudomonas palustris (strain BisB18).